Here is a 366-residue protein sequence, read N- to C-terminus: Tubulin-like protein CetZ (366 aa).

GTP contacts are provided by residues 10-14 (QCGTK), 103-105 (GTG), glutamate 136, asparagine 163, and asparagine 181.

This sequence belongs to the CetZ family.

It is found in the cytoplasm. Its function is as follows. Involved in cell shape control. The protein is Tubulin-like protein CetZ of Pyrococcus furiosus (strain ATCC 43587 / DSM 3638 / JCM 8422 / Vc1).